A 72-amino-acid chain; its full sequence is UPF0154 protein BPUM_1692 (72 aa).

Residues W4 to I24 form a helical membrane-spanning segment.

This sequence belongs to the UPF0154 family.

The protein localises to the cell membrane. This chain is UPF0154 protein BPUM_1692, found in Bacillus pumilus (strain SAFR-032).